A 732-amino-acid chain; its full sequence is MSSASKCPFSGGALKFTAGSGTANRDWWPNQLNLQILRQHSPKSNPMDKAFNYAEAFKSLDLADVKQDIFDLMKSSQDWWPADYGHYGPLFIRMAWHSAGTYRIGDGRGGAGTGNQRFAPINSWPDNANLDKARMLLWPIKQKYGAKISWADLMILAGNCALESMGFKTFGFAGGREDIWEPEEDIYWGAETEWLGDQRYTGDRDLEATLGAVQMGLIYVNPEGPNGHPDPVASGRDIRETFGRMAMNDEETVALTAGGHTFGKCHGAGDDAHVGPEPEGARIEDQCLGWKSSFGTGKGVHAITSGIEGAWTTNPTQWDNNYFENLFGYEWELTKSPAGANQWVPQGGAGANTVPDAHDPSRRHAPIMTTADMAMRMDPIYSPISRRFLDNPDQFADAFARAWFKLTHRDMGPRSRYLGPEVPEEELIWQDPVPAVNHELINEQDIATLKSQILATNLTVSQLVSTAWASAVTYRNSDKRGGANGARIRLAPQRDWEVNQPAQLATVLQTLEAVQTTFNHSQIGGKRVSLADLIVLGGCAGVEQAAKNAGWYDVKVPFKPGRTDATQAQTDVTSFAVLEPRADGFRNYLKGHYPVSAEELLVDKAQLLTLTAPEMTVLVGGLRVLNANVGQAQHGVFTHRPESLTNDFFLNLLDMSVTWAATSEAEEVFEGRDRKTGALKWTGTRVDLIFGSNSQLRALAEVYGCEDSQQRFVQDFVAAWDKVMNLDRFDLA.

A cross-link (tryptophyl-tyrosyl-methioninium (Trp-Tyr) (with M-245)) is located at residues 96-219 (WHSAGTYRIG…LGAVQMGLIY (124 aa)). H97 (proton acceptor) is an active-site residue. Positions 219 to 245 (YVNPEGPNGHPDPVASGRDIRETFGRM) form a cross-link, tryptophyl-tyrosyl-methioninium (Tyr-Met) (with W-96). A heme b-binding site is contributed by H260.

The protein belongs to the peroxidase family. Peroxidase/catalase subfamily. In terms of assembly, homodimer or homotetramer. Heme b is required as a cofactor. Formation of the three residue Trp-Tyr-Met cross-link is important for the catalase, but not the peroxidase activity of the enzyme.

It carries out the reaction H2O2 + AH2 = A + 2 H2O. The enzyme catalyses 2 H2O2 = O2 + 2 H2O. Its function is as follows. Bifunctional enzyme with both catalase and broad-spectrum peroxidase activity. The protein is Catalase-peroxidase of Acaryochloris marina (strain MBIC 11017).